The following is a 253-amino-acid chain: Probable transcriptional regulatory protein Tlet_1011 (253 aa).

Belongs to the TACO1 family.

It is found in the cytoplasm. The sequence is that of Probable transcriptional regulatory protein Tlet_1011 from Pseudothermotoga lettingae (strain ATCC BAA-301 / DSM 14385 / NBRC 107922 / TMO) (Thermotoga lettingae).